The sequence spans 98 residues: NADH-ubiquinone oxidoreductase chain 4L (98 aa).

3 helical membrane passes run 1 to 21 (MSMV…GMLV), 29 to 49 (SLLC…VTIL), and 61 to 81 (IVLL…LVMV).

This sequence belongs to the complex I subunit 4L family. Core subunit of respiratory chain NADH dehydrogenase (Complex I) which is composed of 45 different subunits.

The protein resides in the mitochondrion inner membrane. It carries out the reaction a ubiquinone + NADH + 5 H(+)(in) = a ubiquinol + NAD(+) + 4 H(+)(out). Functionally, core subunit of the mitochondrial membrane respiratory chain NADH dehydrogenase (Complex I) which catalyzes electron transfer from NADH through the respiratory chain, using ubiquinone as an electron acceptor. Part of the enzyme membrane arm which is embedded in the lipid bilayer and involved in proton translocation. This is NADH-ubiquinone oxidoreductase chain 4L (MT-ND4L) from Canis latrans (Coyote).